The following is a 195-amino-acid chain: Large ribosomal subunit protein eL18 (195 aa).

Lysine 126 is covalently cross-linked (Glycyl lysine isopeptide (Lys-Gly) (interchain with G-Cter in SUMO2)). Serine 137 is subject to Phosphoserine. A disordered region spans residues 158–195 (HFGKAPGTPHSHTKPYVRSKGRKFERARGRRASRGYKN). A Phosphothreonine modification is found at threonine 165. 2 stretches are compositionally biased toward basic residues: residues 168 to 178 (SHTKPYVRSKG) and 185 to 195 (RGRRASRGYKN). A Glycyl lysine isopeptide (Lys-Gly) (interchain with G-Cter in SUMO2) cross-link involves residue lysine 171.

The protein belongs to the eukaryotic ribosomal protein eL18 family. As to quaternary structure, component of the large ribosomal subunit.

Its subcellular location is the cytoplasm. The protein resides in the cytosol. It is found in the rough endoplasmic reticulum. In terms of biological role, component of the large ribosomal subunit. The sequence is that of Large ribosomal subunit protein eL18 (RPL18) from Sus scrofa (Pig).